The following is a 531-amino-acid chain: Transmembrane protein 266 (531 aa).

Over 1 to 102 (MALAASFNMT…VFLLSASLNS (102 aa)) the chain is Cytoplasmic. The chain crosses the membrane as a helical span at residues 103 to 123 (FLVACVILVVILLTLELLIDI). Over 124–129 (KLLQFS) the chain is Extracellular. A helical transmembrane segment spans residues 130–150 (SAFQFAGVIHWISLVILSVFF). Residues 151-169 (SETVLRIVVLGIWDYIENK) are Cytoplasmic-facing. The chain crosses the membrane as a helical span at residues 170–190 (IEVFDGAVIILSLAPMVASTV). Residues 191–199 (ANGPRSPWD) are Extracellular-facing. Residues 200–220 (AISLIIMLRIWRVKRVIDAYV) traverse the membrane as a helical segment. At 221–531 (LPVKLEMEMV…EQKLHRVPEA (311 aa)) the chain is on the cytoplasmic side. Residues 231 to 251 (IQQYEKAKVIQDEQLERLTQI) adopt a coiled-coil conformation. The tract at residues 380 to 477 (NGTGATSESA…PAGSAQTSPE (98 aa)) is disordered. A compositionally biased stretch (polar residues) spans 383-412 (GATSESASRSSVTRAQSDSSQTLGSSTDCS). Over residues 421 to 431 (EPGPSPLPLPP) the composition is skewed to pro residues.

As to quaternary structure, homodimer; disulfide-linked.

It is found in the cell membrane. It localises to the cell projection. Its subcellular location is the dendrite. The protein resides in the perikaryon. Voltage-sensor protein present on the post-synaptic side of glutamatergic mossy fibers and granule cells in the cerebellum. Despite the presence of a voltage-sensor segment, does not form a functional ion channel and its precise role remains unclear. Undergoes both rapid and slow structural rearrangements in response to changes in voltage. Contains a zinc-binding site that can regulate the slow conformational transition. The polypeptide is Transmembrane protein 266 (Macaca fascicularis (Crab-eating macaque)).